Consider the following 140-residue polypeptide: Ribonuclease P protein subunit p20 (140 aa).

This sequence belongs to the histone-like Alba family. In terms of assembly, component of nuclear RNase P and RNase MRP complexes. RNase P consists of a catalytic RNA moiety and 10 different protein chains; POP1, POP4, POP5, POP7, RPP14, RPP21, RPP25, RPP30, RPP38 and RPP40. Within the RNase P complex, POP1, POP7 and RPP25 form the 'finger' subcomplex, POP5, RPP14, RPP40 and homodimeric RPP30 form the 'palm' subcomplex, and RPP21, POP4 and RPP38 form the 'wrist' subcomplex. All subunits of the RNase P complex interact with the catalytic RNA. Several subunits of RNase P are also part of the RNase MRP complex. RNase MRP consists of a catalytic RNA moiety and about 8 protein subunits; POP1, POP7, RPP25, RPP30, RPP38, RPP40 and possibly also POP4 and POP5. Interacts with SMN1. POP7 forms a heterodimer with RPP25 that binds to the P3 stem loop of the catalytic RNA.

The protein resides in the nucleus. The protein localises to the nucleolus. It is found in the cytoplasm. It localises to the cytoplasmic granule. Its function is as follows. Component of ribonuclease P, a ribonucleoprotein complex that generates mature tRNA molecules by cleaving their 5'-ends. Also a component of the MRP ribonuclease complex, which cleaves pre-rRNA sequences. The protein is Ribonuclease P protein subunit p20 (Pop7) of Mus musculus (Mouse).